The primary structure comprises 528 residues: Peptide chain release factor 3 (528 aa).

The 269-residue stretch at 10 to 278 (DKRRTFGIIS…TFVDLAPAPQ (269 aa)) folds into the tr-type G domain. Residues 19 to 26 (SHPDAGKT), 87 to 91 (DTPGH), and 141 to 144 (NKLD) contribute to the GTP site.

The protein belongs to the TRAFAC class translation factor GTPase superfamily. Classic translation factor GTPase family. PrfC subfamily.

Its subcellular location is the cytoplasm. Its function is as follows. Increases the formation of ribosomal termination complexes and stimulates activities of RF-1 and RF-2. It binds guanine nucleotides and has strong preference for UGA stop codons. It may interact directly with the ribosome. The stimulation of RF-1 and RF-2 is significantly reduced by GTP and GDP, but not by GMP. This is Peptide chain release factor 3 from Oleidesulfovibrio alaskensis (strain ATCC BAA-1058 / DSM 17464 / G20) (Desulfovibrio alaskensis).